A 74-amino-acid chain; its full sequence is Protein kish-B (74 aa).

The first 22 residues, 1 to 22 (MTNVYSLDGLLVFALLFVCTCA), serve as a signal peptide directing secretion. The Extracellular portion of the chain corresponds to 23 to 52 (YFRKVPRLRSWLLSEKKGVWGVFYKAAVIG). Residues 53-73 (SRLHLAVSISCIAMAFYVLFI) traverse the membrane as a helical segment. Residue K74 is a topological domain, cytoplasmic.

It belongs to the KISH family.

The protein resides in the golgi apparatus membrane. In terms of biological role, involved in the early part of the secretory pathway. The sequence is that of Protein kish-B (tmem167b) from Xenopus laevis (African clawed frog).